Reading from the N-terminus, the 301-residue chain is GTPase Era (301 aa).

An Era-type G domain is found at Tyr-7–Glu-175. Residues Gly-15–Ser-22 are G1. A GTP-binding site is contributed by Gly-15–Ser-22. Positions Gln-41–His-45 are G2. Residues Asp-62 to Gly-65 form a G3 region. Residues Asp-62–Leu-66 and Asn-124–Asp-127 contribute to the GTP site. Residues Asn-124–Asp-127 are G4. Residues Ile-154 to Ala-156 are G5. The region spanning Leu-206–Ser-283 is the KH type-2 domain.

It belongs to the TRAFAC class TrmE-Era-EngA-EngB-Septin-like GTPase superfamily. Era GTPase family. Monomer.

The protein localises to the cytoplasm. The protein resides in the cell inner membrane. Its function is as follows. An essential GTPase that binds both GDP and GTP, with rapid nucleotide exchange. Plays a role in 16S rRNA processing and 30S ribosomal subunit biogenesis and possibly also in cell cycle regulation and energy metabolism. The chain is GTPase Era from Escherichia coli (strain K12 / DH10B).